The sequence spans 486 residues: FAD-dependent oxidoreductase domain-containing protein 1 (486 aa).

Residues 66 to 82 (VVIVGGGVLGLSVAYWL) traverse the membrane as a helical segment.

As to quaternary structure, associates with components of the mitochondrial respiratory chain complex I. It depends on FAD as a cofactor.

Its subcellular location is the mitochondrion inner membrane. Required for the assembly of the mitochondrial membrane respiratory chain NADH dehydrogenase (Complex I). Involved in mid-late stages of complex I assembly. This chain is FAD-dependent oxidoreductase domain-containing protein 1 (FOXRED1), found in Bos taurus (Bovine).